The chain runs to 507 residues: MSYETIPTSDENFDRDVSATNRNVFGWYLYAFSSEPFIVSAMSTYFPLLLEEFARNNGVQVDDHTVACGAEDKHCVLPLFGRRVFVDTSSFALYTFALGVLLQTVLVISVSGVVDVCKTVRFKRNVLLSFGMVGGLATCSTVLLRGNQYYILALLTVISNCCYGVINVVGNSLLPDVVSDLKRVLYLYRVIDSDQLTTVISGRGSGIGYIAAFVVQLCSVWLLRQPEYRDDIRVAVLLVGGWWMLFQLPLIWMLDDVVVRENSTQFKWSRSRQYLKAGWQSLGHAAMHANLLKDVLIFLVGWFIISDSITTINSAAILFSKTELHMSTVNLVVISILTMINAVIGAYFVPQLLSERLELPPHQSLIYLICWAGVIPFYGTLGFVFQSIGLKHPFEMYILAVWYGISMGGLAAVSRSVFSLLIPRGKESTFFSLFSITDKGSSVVGPLLIGLITDKTHNIRYSFYFLFLFVVASIPVFNALNVQRGKVEAEELAGINESRLETNDGFA.

6 helical membrane-spanning segments follow: residues 24–44, 90–110, 126–146, 150–170, 203–223, and 234–254; these read VFGW…AMST, SFAL…VISV, VLLS…LLRG, YILA…NVVG, RGSG…VWLL, and VAVL…IWML. The N-linked (GlcNAc...) asparagine glycan is linked to Asn-262. The next 6 helical transmembrane spans lie at 295 to 315, 329 to 349, 365 to 385, 393 to 413, 433 to 453, and 462 to 482; these read VLIF…INSA, VNLV…AYFV, LIYL…GFVF, PFEM…LAAV, LFSI…GLIT, and SFYF…ALNV. Asn-496 is a glycosylation site (N-linked (GlcNAc...) asparagine).

This sequence belongs to the ATG22 family.

Its subcellular location is the vacuole membrane. Functionally, vacuolar effluxer which mediate the efflux of amino acids resulting from autophagic degradation. The release of autophagic amino acids allows the maintenance of protein synthesis and viability during nitrogen starvation. The sequence is that of Autophagy-related protein 22 (ATG22) from Eremothecium gossypii (strain ATCC 10895 / CBS 109.51 / FGSC 9923 / NRRL Y-1056) (Yeast).